A 156-amino-acid polypeptide reads, in one-letter code: Peptidyl-prolyl cis-trans isomerase cypE (156 aa).

A PPIase cyclophilin-type domain is found at 2 to 155; sequence TEQTVTLQTT…DEIRIIKATA (154 aa).

The protein belongs to the cyclophilin-type PPIase family. As to quaternary structure, interacts with snwA.

Its subcellular location is the cytoplasm. It localises to the nucleus. It carries out the reaction [protein]-peptidylproline (omega=180) = [protein]-peptidylproline (omega=0). Catalyzes the cis-trans isomerization of proline imidic peptide bonds in oligopeptides. Plays a role in protein folding, transport and assembly. The sequence is that of Peptidyl-prolyl cis-trans isomerase cypE (cypE) from Dictyostelium discoideum (Social amoeba).